Consider the following 184-residue polypeptide: DOMON domain-containing protein CBG21755 (184 aa).

The first 20 residues, 1–20 (MIVPISLLFLFLSFVPFSYS), serve as a signal peptide directing secretion. The 118-residue stretch at 28–145 (EVASMSWMVK…CVNWIVVPGG (118 aa)) folds into the DOMON domain. The N-linked (GlcNAc...) asparagine glycan is linked to Asn49.

It localises to the secreted. The polypeptide is DOMON domain-containing protein CBG21755 (Caenorhabditis briggsae).